We begin with the raw amino-acid sequence, 219 residues long: Probable GTP-binding protein EngB (219 aa).

The region spanning 24-207 (VQPEVAFAGR…HALIESWVRP (184 aa)) is the EngB-type G domain. GTP contacts are provided by residues 32 to 39 (GRSNAGKS), 59 to 63 (GRTQH), 81 to 84 (DLPG), 148 to 151 (TKCD), and 185 to 188 (LFSA). Mg(2+) is bound by residues S39 and T61.

Belongs to the TRAFAC class TrmE-Era-EngA-EngB-Septin-like GTPase superfamily. EngB GTPase family. Mg(2+) serves as cofactor.

Functionally, necessary for normal cell division and for the maintenance of normal septation. The chain is Probable GTP-binding protein EngB from Burkholderia mallei (strain ATCC 23344).